Here is an 86-residue protein sequence, read N- to C-terminus: CRISPR-associated endoribonuclease Cas2 (86 aa).

Residue D8 participates in Mg(2+) binding.

It belongs to the CRISPR-associated endoribonuclease Cas2 protein family. As to quaternary structure, homodimer, forms a heterotetramer with a Cas1 homodimer. Requires Mg(2+) as cofactor.

Its function is as follows. CRISPR (clustered regularly interspaced short palindromic repeat), is an adaptive immune system that provides protection against mobile genetic elements (viruses, transposable elements and conjugative plasmids). CRISPR clusters contain sequences complementary to antecedent mobile elements and target invading nucleic acids. CRISPR clusters are transcribed and processed into CRISPR RNA (crRNA). Functions as a ssRNA-specific endoribonuclease. Involved in the integration of spacer DNA into the CRISPR cassette. Plasmid targeted by CRISPR locus P1 transform wild-type cells very poorly. The sequence is that of CRISPR-associated endoribonuclease Cas2 from Haloferax volcanii (strain ATCC 29605 / DSM 3757 / JCM 8879 / NBRC 14742 / NCIMB 2012 / VKM B-1768 / DS2) (Halobacterium volcanii).